The primary structure comprises 2841 residues: MAAHRPVEWVQAVVSRFDEQLPIKTGQQNTHTKVSTEHNKECLINISKYKFSLVISGLTTILKNVNNMRIFGEAAEKNLYLSQLIILDTLEKCLAGQPKDTMRLDETMLVKQLLPEICHFLHTCREGNQHAAELRNSASGVLFSLSCNNFNAVFSRISTRLQELTVCSEDNVDVHDIELLQYINVDCAKLKRLLKETAFKFKALKKVAQLAVINSLEKAFWNWVENYPDEFTKLYQIPQTDMAECAEKLFDLVDGFAESTKRKAAVWPLQIILLILCPEIIQDISKDVVDESNINKKLFLDSLRKALAGHGGSRQLTESAAIACVKLCKASTYINWEDNSVIFLLVQSMVVDLKNLLFNPSKPFSRGSQPADVDLMIDCLVSCFRISPHNNQHFKICLAQNSPSTFHYVLVNSLHRIITNSALDWWPKIDAVYCHSVELRNMFGETLHKAVQGCGAHPAIRMAPSLTFKEKVTSLKFKEKPTDLETRSYKCLLLSMVKLIHADPKLLLCNPRKQGPETQSSTAELITGLVQLVPQSHMPEVAQEAMEALLVLHQLDSIDLWNPDAPVETFWEISSQMLFYICKKLTSHQMLSSTEILKWLREILICRNKFLLKNKQADRSSCHSLYLYGVGCEMSATGNTTQMSVDHDEFLRACTPGASLRKGRGNSSMDSTAGCSGTPPICRQAQTKLEVALYMFLWNPDTEAVLVAMSCFRHLCEEADIRCGVDEVSVHNFLPNYNTFMEFASVSNMMSTGRAALQKRVMALLRRIEHPTAGNIEAWEDTHAKWEQATKLILNYPKAKMEDGQAAESLHKTIVKRRMSHVSGGGSIDLSDTDSLQEWINMTGFLCALGGVCLQQRSSSGLATYSPPMGAVSERKGSMISVMSSEGNIDSPVSRFMDRLLSLMVCNHEKVGLQIRTNVKDLVGLELSPALYPMLFNKLKNTISKFFDSQGQVLLSDSNTQFVEQTIAIMKNLLDNHTEGSSEHLGQASIETMMLNLVRYVRVLGNMVHAIQIKTKLCQLVEVMMARRDDLSFCQEMKFRNKMVEYLTDWVMGTSNQAADDDIKCLTRDLDQASMEAVVSLLAGLPLQPEEGDGVELMEAKSQLFLKYFTLFMNLLNDCSEVEDENAQTGGRKRGMSRRLASLRHCTVLAMSNLLNANVDSGLMHSIGLGYHKDLQTRATFMEVLTKILQQGTEFDTLAETVLADRFERLVELVTMMGDQGELPIAMALANVVPCSQWDELARVLVTLFDSRHLLYQLLWNMFSKEVELADSMQTLFRGNSLASKIMTFCFKVYGATYLQKLLDPLLRVIITSSDWQHVSFEVDPTRLEPSESLEENQRNLLQMTEKFFHAIISSSSEFPSQLRSVCHCLYQATCHSLLNKATVKERKENKKSVVSQRFPQNSIGAVGSAMFLRFINPAIVSPYEAGILDKKPPPRIERGLKLMSKVLQSIANHVLFTKEEHMRPFNDFVKSNFDLARRFFLDIASDCPTSDAVNHSLSFISDGNVLALHRLLWNNQEKIGQYLSSNRDHKAVGRRPFDKMATLLAYLGPPEHKPVADTHWSSLNLTSSKFEEFMTRHQVHEKEEFKALKTLSIFYQAGTSKAGNPIFYYVARRFKTGQINGDLLIYHVLLTLKPYYAKPYEIVVDLTHTGPSNRFKTDFLSKWFVVFPGFAYDNVSAVYIYNCNSWVREYTKYHERLLTGLKGSKRLIFIDCPGKLAEHIEHEQQKLPAATLALEEDLKVFHNALKLAHKDTKVSIKVGSTAVQVTSAERTKVLGQSVFLNDIYYASEIEEICLVDENQFTLTIANQGTPLTFMHQECEAIVQSIIHIRTRWELSQPDSIPQHTKIRPKDVPGTLLNIALLNLGSSDPSLRSAAYNLLCALTCTFNLKIEGQLLETSGLCIPANNTLFIVSISKTLAANEPHLTLEFLEECISGFSKSSIELKHLCLEYMTPWLSNLVRFCKHNDDAKRQRVTAILDKLITMTINEKQMYPSIQAKIWGSLGQITDLLDVVLDSFIKTSATGGLGSIKAEVMADTAVALASGNVKLVSSKVIGRMCKIIDKTCLSPTPTLEQHLMWDDIAILARYMLMLSFNNSLDVAAHLPYLFHVVTFLVATGPLSLRASTHGLLINIIHSLCTCSQLHFSEETKQVLRLSLTEFSLPKFYLLFGISKVKSAAVIAFRSSYRDRSFSPGSYERETFALTSLETVTEALLEIMEACMRDIPTCKWLDQWTELAQRFAFQYNPSLQPRALVVFGCISKRVSHGQIKQIIRILSKALESCLKGPDTYNSQVLIESTVIALTKLQPLLNKDSPLHKALFWVAVAVLQLDEVNLYSAGTALLEQNLHTLDSLRIFNDKSPEEVFMAIRNPLEWHCKQMDHFVGLNFNSNFNFALVGHLLKGYRHPSPAIVARTVRILHTLLTLVNKHRNCDKFEVNTQSVAYLAALLTVSEEVRSRCSLKHRKSLLLTDISMENVPMDTYPIHHGDPSYRTLKETQPWSSPKGSEGYLAATYPAVGQTSPRARKSMSLDMGQPSQANTKKLLGTRKSFDHLISDTKAPKRQEMESGITTPPKMRRVAETDYEMETQRIPSSQQHPHLRKVSVSESNVLLDEEVLTDPKIQALLLTVLATLVKYTTDEFDQRILYEYLAEASVVFPKVFPVVHNLLDSKINTLLSLCQDPNLLNPIHGIVQSVVYHEESPPQYQTSYLQSFGFNGLWRFAGPFSKQTQIPDYAELIVKFLDALIDTYLPGIDEETSEESLLTPTSPYPPALQSQLSITANLNLSNSMTSLATSQHSPGLDKENVELSPTAGHCNSGRTRHGSASQVQKQRSAGSFKRNSIKKIV.

Residue Ala-2 is modified to N-acetylalanine. Ser-866 and Ser-878 each carry phosphoserine. The 232-residue stretch at 1253–1484 folds into the Ras-GAP domain; the sequence is HLLYQLLWNM…DLARRFFLDI (232 aa). The region spanning 1582–1740 is the CRAL-TRIO domain; the sequence is EKEEFKALKT…ATLALEEDLK (159 aa). The lipid binding stretch occupies residues 1582-1839; that stretch reads EKEEFKALKT…RTRWELSQPD (258 aa). A phosphoserine mark is found at Ser-2190 and Ser-2469. A Phosphothreonine modification is found at Thr-2516. 4 positions are modified to phosphoserine: Ser-2517, Ser-2523, Ser-2525, and Ser-2545. The Bipartite nuclear localization signal motif lies at 2557-2573; it reads KRQEMESGITTPPKMRR. Phosphothreonine is present on Thr-2567. Phosphoserine is present on residues Ser-2599, Ser-2804, and Ser-2819. The disordered stretch occupies residues 2786–2841; it reads SLATSQHSPGLDKENVELSPTAGHCNSGRTRHGSASQVQKQRSAGSFKRNSIKKIV. The segment covering 2818-2829 has biased composition (polar residues); that stretch reads GSASQVQKQRSA.

In terms of assembly, interacts with HTR6. Interacts with SPRED2. Post-translationally, ubiquitinated by RNF7/RBX2, leading to its degradation. In terms of tissue distribution, expressed predominantly in brain, spinal cord and testis. As to expression, expressed predominantly in adrenal gland, kidney, ovary and lung. Widely and more weakly expressed. Predominantly expressed in adrenal gland. In terms of tissue distribution, widely and more weakly expressed. Expressed mainly in testis.

The protein localises to the nucleus. It localises to the nucleolus. The protein resides in the cell membrane. Stimulates the GTPase activity of Ras. NF1 shows greater affinity for Ras GAP, but lower specific activity. May be a regulator of Ras activity. This chain is Neurofibromin (Nf1), found in Mus musculus (Mouse).